The sequence spans 136 residues: Probable acyltransferase SID5 (136 aa).

The protein operates within siderophore biosynthesis. Its function is as follows. Probable acyltransferase; part of the gene cluster that mediates the biosynthesis of hydroxamate-containing siderophores that play a critical role in virulence via intracellular iron acquisition during macrophage infection. This chain is Probable acyltransferase SID5, found in Ajellomyces capsulatus (Darling's disease fungus).